The primary structure comprises 389 residues: LL-diaminopimelate aminotransferase (389 aa).

Positions 13 and 38 each coordinate substrate. Residues Tyr-67, 101–102 (SK), Tyr-126, Asn-176, Tyr-207, and 235–237 (SLS) each bind pyridoxal 5'-phosphate. Residues Lys-102, Tyr-126, and Asn-176 each coordinate substrate. An N6-(pyridoxal phosphate)lysine modification is found at Lys-238. Arg-246 is a pyridoxal 5'-phosphate binding site. Position 364 (Arg-364) interacts with substrate.

It belongs to the class-I pyridoxal-phosphate-dependent aminotransferase family. LL-diaminopimelate aminotransferase subfamily. In terms of assembly, homodimer. The cofactor is pyridoxal 5'-phosphate.

The enzyme catalyses (2S,6S)-2,6-diaminopimelate + 2-oxoglutarate = (S)-2,3,4,5-tetrahydrodipicolinate + L-glutamate + H2O + H(+). Its pathway is amino-acid biosynthesis; L-lysine biosynthesis via DAP pathway; LL-2,6-diaminopimelate from (S)-tetrahydrodipicolinate (aminotransferase route): step 1/1. Functionally, involved in the synthesis of meso-diaminopimelate (m-DAP or DL-DAP), required for both lysine and peptidoglycan biosynthesis. Catalyzes the direct conversion of tetrahydrodipicolinate to LL-diaminopimelate. The polypeptide is LL-diaminopimelate aminotransferase (Halothermothrix orenii (strain H 168 / OCM 544 / DSM 9562)).